Reading from the N-terminus, the 238-residue chain is 15,16-dihydrobiliverdin:ferredoxin oxidoreductase (238 aa).

The protein belongs to the HY2 family.

The enzyme catalyses 15,16-dihydrobiliverdin + oxidized 2[4Fe-4S]-[ferredoxin] = biliverdin IXalpha + reduced 2[4Fe-4S]-[ferredoxin] + 2 H(+). Functionally, catalyzes the two-electron reduction of biliverdin IX-alpha at the C15 methine bridge. This Prochlorococcus marinus (strain NATL2A) protein is 15,16-dihydrobiliverdin:ferredoxin oxidoreductase.